Here is a 161-residue protein sequence, read N- to C-terminus: Protein-export protein SecB (161 aa).

Belongs to the SecB family. In terms of assembly, homotetramer, a dimer of dimers. One homotetramer interacts with 1 SecA dimer.

Its subcellular location is the cytoplasm. One of the proteins required for the normal export of preproteins out of the cell cytoplasm. It is a molecular chaperone that binds to a subset of precursor proteins, maintaining them in a translocation-competent state. It also specifically binds to its receptor SecA. This Shewanella pealeana (strain ATCC 700345 / ANG-SQ1) protein is Protein-export protein SecB.